Consider the following 242-residue polypeptide: UPF0157 protein PA4798 (242 aa).

The interval 215–242 is disordered; that stretch reads AGAESTPGGPADTAYFESLRSRVSKPQD.

It belongs to the UPF0157 (GrpB) family.

This chain is UPF0157 protein PA4798, found in Pseudomonas aeruginosa (strain ATCC 15692 / DSM 22644 / CIP 104116 / JCM 14847 / LMG 12228 / 1C / PRS 101 / PAO1).